The chain runs to 211 residues: Large ribosomal subunit protein eL13 (211 aa).

Lys-16 is subject to N6-acetyllysine. A phosphoserine mark is found at Ser-52 and Ser-77. Glycyl lysine isopeptide (Lys-Gly) (interchain with G-Cter in SUMO2) cross-links involve residues Lys-123 and Lys-145. Lys-174 participates in a covalent cross-link: Glycyl lysine isopeptide (Lys-Gly) (interchain with G-Cter in SUMO1); alternate. Glycyl lysine isopeptide (Lys-Gly) (interchain with G-Cter in SUMO2); alternate cross-links involve residues Lys-174 and Lys-177. Lys-177 carries the post-translational modification N6-acetyllysine; alternate.

This sequence belongs to the eukaryotic ribosomal protein eL13 family. As to quaternary structure, component of the 60S large ribosomal subunit (LSU).

It is found in the cytoplasm. Its function is as follows. Component of the ribosome, a large ribonucleoprotein complex responsible for the synthesis of proteins in the cell. The small ribosomal subunit (SSU) binds messenger RNAs (mRNAs) and translates the encoded message by selecting cognate aminoacyl-transfer RNA (tRNA) molecules. The large subunit (LSU) contains the ribosomal catalytic site termed the peptidyl transferase center (PTC), which catalyzes the formation of peptide bonds, thereby polymerizing the amino acids delivered by tRNAs into a polypeptide chain. The nascent polypeptides leave the ribosome through a tunnel in the LSU and interact with protein factors that function in enzymatic processing, targeting, and the membrane insertion of nascent chains at the exit of the ribosomal tunnel. As part of the LSU, it is probably required for its formation and the maturation of rRNAs. Plays a role in bone development. In Bos taurus (Bovine), this protein is Large ribosomal subunit protein eL13 (RPL13).